The chain runs to 702 residues: Cell adhesion molecule CEACAM5 (702 aa).

The first 34 residues, 1 to 34 (MESPSAPPHRWCIPWQRLLLTASLLTFWNPPTTA), serve as a signal peptide directing secretion. The region spanning 35–144 (KLTIESTPFN…TGQFRVYPEL (110 aa)) is the Ig-like V-type domain. N-linked (GlcNAc...) asparagine glycans are attached at residues Asn-104, Asn-115, Asn-152, Asn-182, Asn-197, Asn-204, Asn-208, Asn-246, Asn-256, Asn-274, Asn-288, Asn-292, Asn-309, Asn-330, Asn-351, Asn-360, Asn-375, Asn-432, Asn-466, Asn-480, Asn-508, Asn-529, Asn-553, Asn-560, Asn-580, Asn-612, Asn-650, and Asn-665. 6 Ig-like C2-type domains span residues 145–232 (PKPS…VILN), 240–315 (PTIS…TVTT), 323–410 (PKPF…VILN), 418–495 (PTIS…KTIT), 501–588 (PKPS…VTLD), and 593–675 (PDTP…ITVS). Cys-167 and Cys-215 are oxidised to a cystine. A disulfide bond links Cys-259 and Cys-299. A disulfide bridge links Cys-345 with Cys-393. The cysteines at positions 437 and 477 are disulfide-linked. A disulfide bond links Cys-523 and Cys-571. Cys-615 and Cys-655 are joined by a disulfide. Residue Ala-685 is the site of GPI-anchor amidated alanine attachment. A propeptide spans 686–702 (GATVGIMIGVLVGVALI) (removed in mature form).

It belongs to the immunoglobulin superfamily. CEA family. Homodimer. Complex immunoreactive glycoprotein with a MW of 180 kDa comprising 60% carbohydrate. Expressed in columnar epithelial and goblet cells of the colon (at protein level). Found in adenocarcinomas of endodermally derived digestive system epithelium and fetal colon.

It localises to the cell membrane. The protein localises to the apical cell membrane. It is found in the cell surface. In terms of biological role, cell surface glycoprotein that plays a role in cell adhesion, intracellular signaling and tumor progression. Mediates homophilic and heterophilic cell adhesion with other carcinoembryonic antigen-related cell adhesion molecules, such as CEACAM6. Plays a role as an oncogene by promoting tumor progression; induces resistance to anoikis of colorectal carcinoma cells. Its function is as follows. (Microbial infection) Receptor for E.coli Dr adhesins. Binding of E.coli Dr adhesins leads to dissociation of the homodimer. In Homo sapiens (Human), this protein is Cell adhesion molecule CEACAM5.